A 240-amino-acid polypeptide reads, in one-letter code: 2,3,4,5-tetrahydropyridine-2,6-dicarboxylate N-acetyltransferase (240 aa).

Belongs to the transferase hexapeptide repeat family. DapH subfamily.

It catalyses the reaction (S)-2,3,4,5-tetrahydrodipicolinate + acetyl-CoA + H2O = L-2-acetamido-6-oxoheptanedioate + CoA. It functions in the pathway amino-acid biosynthesis; L-lysine biosynthesis via DAP pathway; LL-2,6-diaminopimelate from (S)-tetrahydrodipicolinate (acetylase route): step 1/3. Catalyzes the transfer of an acetyl group from acetyl-CoA to tetrahydrodipicolinate. The sequence is that of 2,3,4,5-tetrahydropyridine-2,6-dicarboxylate N-acetyltransferase from Staphylococcus epidermidis (strain ATCC 12228 / FDA PCI 1200).